Reading from the N-terminus, the 548-residue chain is Chaperonin GroEL 2 (548 aa).

ATP-binding positions include 29–32 (TLGP), 86–90 (DGTTT), Gly-418, 482–484 (NAA), and Asp-498.

The protein belongs to the chaperonin (HSP60) family. In terms of assembly, forms a cylinder of 14 subunits composed of two heptameric rings stacked back-to-back. Interacts with the co-chaperonin GroES.

It is found in the cytoplasm. The catalysed reaction is ATP + H2O + a folded polypeptide = ADP + phosphate + an unfolded polypeptide.. Together with its co-chaperonin GroES, plays an essential role in assisting protein folding. The GroEL-GroES system forms a nano-cage that allows encapsulation of the non-native substrate proteins and provides a physical environment optimized to promote and accelerate protein folding. This Corynebacterium glutamicum (strain ATCC 13032 / DSM 20300 / JCM 1318 / BCRC 11384 / CCUG 27702 / LMG 3730 / NBRC 12168 / NCIMB 10025 / NRRL B-2784 / 534) protein is Chaperonin GroEL 2.